A 648-amino-acid polypeptide reads, in one-letter code: Protein associated with UVRAG as autophagy enhancer (648 aa).

Composition is skewed to polar residues over residues 131-146 and 157-173; these read QESL…TSPS and PHLT…SSSR. The segment at 131–173 is disordered; the sequence is QESLLKNPKTVATSPSPKEGSARSESPHLTASTDDGDARSSSR. S144 is subject to Phosphoserine. The tract at residues 183 to 222 is interaction with UVRAG; the sequence is ETFMLPADVEKENLHFYAADIIISVIENMKCNLPNQQQPE. K469, K509, K519, K559, and K619 each carry N6-acetyllysine.

Interacts with UVRAG; the interaction is direct and promotes association with the PI3K/PI3KC3 and HOPS complexes. Interacts with STX17. Post-translationally, phosphorylated by MTOR at Ser-144 under nutrient-rich conditions. Phosphorylation prevents acetylation by KAT5/TIP60 and impairs RUBCNL/PACER function and autophagosome maturation. Under autophagy induction, Phosphorylation by MTOR is repressed, enabling acetylation by KAT5/TIP60. In terms of processing, acetylated by KAT5/TIP60 under autophagy induction, promoting autophagosome maturation and lipid metabolism. Acetylation is prevented by phosphorylation by MTOR. Lys-469 and Lys-559 constitute the key sites for tuning function in autophagy.

The protein localises to the cytoplasmic vesicle. It is found in the autophagosome membrane. Functionally, regulator of autophagy that promotes autophagosome maturation by facilitating the biogenesis of phosphatidylinositol 3-phosphate (PtdIns(3)P) in late steps of autophagy. Acts by antagonizing RUBCN, thereby stimulating phosphatidylinositol 3-kinase activity of the PI3K/PI3KC3 complex. Following anchorage to the autophagosomal SNARE STX17, promotes the recruitment of PI3K/PI3KC3 and HOPS complexes to the autophagosome to regulate the fusion specificity of autophagosomes with late endosomes/lysosomes. Binds phosphoinositides phosphatidylinositol 3-phosphate (PtdIns(3)P), 4-phosphate (PtdIns(4)P) and 5-phosphate (PtdIns(5)P). In addition to its role in autophagy, acts as a regulator of lipid and glycogen homeostasis. May act as a tumor suppressor. This chain is Protein associated with UVRAG as autophagy enhancer, found in Mus musculus (Mouse).